The chain runs to 266 residues: 22 kDa alpha-zein 4 (266 aa).

An N-terminal signal peptide occupies residues 1 to 21; sequence MATKILSLLALLALFASATNA.

It belongs to the zein family. As to quaternary structure, interacts with OP10 (via N-terminus). As to expression, expressed in endosperm, mainly in the peripheral regions.

In terms of biological role, zeins are major seed storage proteins. This is 22 kDa alpha-zein 4 from Zea mays (Maize).